The chain runs to 436 residues: ATP-dependent protease ATPase subunit HslU (436 aa).

ATP-binding positions include I18, 60 to 65, D249, E314, and R386; that span reads GVGKTE.

Belongs to the ClpX chaperone family. HslU subfamily. In terms of assembly, a double ring-shaped homohexamer of HslV is capped on each side by a ring-shaped HslU homohexamer. The assembly of the HslU/HslV complex is dependent on binding of ATP.

The protein localises to the cytoplasm. Its function is as follows. ATPase subunit of a proteasome-like degradation complex; this subunit has chaperone activity. The binding of ATP and its subsequent hydrolysis by HslU are essential for unfolding of protein substrates subsequently hydrolyzed by HslV. HslU recognizes the N-terminal part of its protein substrates and unfolds these before they are guided to HslV for hydrolysis. The chain is ATP-dependent protease ATPase subunit HslU from Ruegeria sp. (strain TM1040) (Silicibacter sp.).